Reading from the N-terminus, the 383-residue chain is S-adenosylmethionine synthase 1 (383 aa).

His15 contacts ATP. Asp17 lines the Mg(2+) pocket. Glu43 serves as a coordination point for K(+). L-methionine is bound by residues Glu56 and Gln99. The interval 99-109 (QSPDIDLGVSR) is flexible loop. ATP contacts are provided by residues 162 to 164 (DGK), 228 to 229 (RF), Asp237, 243 to 244 (RK), Ala260, and Lys264. Asp237 contacts L-methionine. Lys268 contributes to the L-methionine binding site.

It belongs to the AdoMet synthase family. As to quaternary structure, homotetramer; dimer of dimers. Mg(2+) serves as cofactor. It depends on K(+) as a cofactor.

The protein resides in the cytoplasm. It catalyses the reaction L-methionine + ATP + H2O = S-adenosyl-L-methionine + phosphate + diphosphate. Its pathway is amino-acid biosynthesis; S-adenosyl-L-methionine biosynthesis; S-adenosyl-L-methionine from L-methionine: step 1/1. Its function is as follows. Catalyzes the formation of S-adenosylmethionine (AdoMet) from methionine and ATP. The overall synthetic reaction is composed of two sequential steps, AdoMet formation and the subsequent tripolyphosphate hydrolysis which occurs prior to release of AdoMet from the enzyme. The polypeptide is S-adenosylmethionine synthase 1 (Rhodospirillum rubrum (strain ATCC 11170 / ATH 1.1.1 / DSM 467 / LMG 4362 / NCIMB 8255 / S1)).